Reading from the N-terminus, the 335-residue chain is Tetraacyldisaccharide 4'-kinase (335 aa).

59 to 66 is an ATP binding site; that stretch reads TAGGNGKT.

This sequence belongs to the LpxK family.

It carries out the reaction a lipid A disaccharide + ATP = a lipid IVA + ADP + H(+). It participates in glycolipid biosynthesis; lipid IV(A) biosynthesis; lipid IV(A) from (3R)-3-hydroxytetradecanoyl-[acyl-carrier-protein] and UDP-N-acetyl-alpha-D-glucosamine: step 6/6. Functionally, transfers the gamma-phosphate of ATP to the 4'-position of a tetraacyldisaccharide 1-phosphate intermediate (termed DS-1-P) to form tetraacyldisaccharide 1,4'-bis-phosphate (lipid IVA). The protein is Tetraacyldisaccharide 4'-kinase of Vibrio campbellii (strain ATCC BAA-1116).